The primary structure comprises 302 residues: Putative fructose-bisphosphate aldolase (302 aa).

Aspartate 86 functions as the Proton donor in the catalytic mechanism. 4 residues coordinate Zn(2+): histidine 87, aspartate 116, glutamate 146, and histidine 192. Residue glycine 193 coordinates dihydroxyacetone phosphate. Histidine 223 is a Zn(2+) binding site. Residues 224–226 (GAD) and 245–248 (NVNR) contribute to the dihydroxyacetone phosphate site.

Belongs to the class II fructose-bisphosphate aldolase family. Homodimer. The cofactor is Zn(2+).

It carries out the reaction beta-D-fructose 1,6-bisphosphate = D-glyceraldehyde 3-phosphate + dihydroxyacetone phosphate. Its pathway is carbohydrate degradation; glycolysis; D-glyceraldehyde 3-phosphate and glycerone phosphate from D-glucose: step 4/4. Functionally, catalyzes the aldol condensation of dihydroxyacetone phosphate (DHAP or glycerone-phosphate) with glyceraldehyde 3-phosphate (G3P) to form fructose 1,6-bisphosphate (FBP) in gluconeogenesis and the reverse reaction in glycolysis. In Coccidioides immitis (strain RS) (Valley fever fungus), this protein is Putative fructose-bisphosphate aldolase.